Reading from the N-terminus, the 435-residue chain is Transcriptional enhancer factor TEF-5 (435 aa).

Polar residues predominate over residues 1–12 (MASNSWNASSSP). The segment at 1–34 (MASNSWNASSSPGEAREDGPEGLDKGLDNDAEGV) is disordered. Residue alanine 2 is modified to N-acetylalanine. The segment covering 14–28 (EAREDGPEGLDKGLD) has biased composition (basic and acidic residues). Residues 28–104 (DNDAEGVWSP…QVLARKKVRE (77 aa)) constitute a DNA-binding region (TEA). Serine 148 carries the phosphoserine modification. A transcriptional activation region spans residues 173 to 435 (GPSQDIKPFA…QHHVYKLVKD (263 aa)).

Interacts with YAP1 and WWTR1/TAZ. In terms of tissue distribution, preferentially expressed in the placenta.

It is found in the nucleus. Functionally, transcription factor which plays a key role in the Hippo signaling pathway, a pathway involved in organ size control and tumor suppression by restricting proliferation and promoting apoptosis. The core of this pathway is composed of a kinase cascade wherein MST1/MST2, in complex with its regulatory protein SAV1, phosphorylates and activates LATS1/2 in complex with its regulatory protein MOB1, which in turn phosphorylates and inactivates YAP1 oncoprotein and WWTR1/TAZ. Acts by mediating gene expression of YAP1 and WWTR1/TAZ, thereby regulating cell proliferation, migration and epithelial mesenchymal transition (EMT) induction. Binds to multiple functional elements of the human chorionic somatomammotropin-B gene enhancer. This chain is Transcriptional enhancer factor TEF-5 (TEAD3), found in Homo sapiens (Human).